The following is a 72-amino-acid chain: Translation initiation factor IF-1 (72 aa).

An S1-like domain is found at 1-72; sequence MTKEDSFEMH…SKGRIIFRSR (72 aa).

It belongs to the IF-1 family. In terms of assembly, component of the 30S ribosomal translation pre-initiation complex which assembles on the 30S ribosome in the order IF-2 and IF-3, IF-1 and N-formylmethionyl-tRNA(fMet); mRNA recruitment can occur at any time during PIC assembly.

Its subcellular location is the cytoplasm. In terms of biological role, one of the essential components for the initiation of protein synthesis. Stabilizes the binding of IF-2 and IF-3 on the 30S subunit to which N-formylmethionyl-tRNA(fMet) subsequently binds. Helps modulate mRNA selection, yielding the 30S pre-initiation complex (PIC). Upon addition of the 50S ribosomal subunit IF-1, IF-2 and IF-3 are released leaving the mature 70S translation initiation complex. The polypeptide is Translation initiation factor IF-1 (Blochmanniella pennsylvanica (strain BPEN)).